The sequence spans 365 residues: C-X-C chemokine receptor type 3 (365 aa).

The Extracellular portion of the chain corresponds to 1–57 (MVPEMSERQVFQASELTYLLENCSSSYDYAENESDSCCASPPCPQDISLNFDRAFLP). Residue Asn22 is glycosylated (N-linked (GlcNAc...) asparagine). 2 positions are modified to sulfotyrosine: Tyr27 and Tyr29. A glycan (N-linked (GlcNAc...) asparagine) is linked at Asn32. A helical transmembrane segment spans residues 58-78 (ALYGLLFLLGLLGNGAVAAVL). The Cytoplasmic segment spans residues 79 to 88 (CSQRAARTST). A helical membrane pass occupies residues 89-109 (DTFLLHLAVADMLLVLTLPLW). Topologically, residues 110–126 (RVDTAVQWVFGSGLCKV) are extracellular. Cysteines 124 and 203 form a disulfide. A helical membrane pass occupies residues 127–147 (AGALFNINFYAGALLLACISF). Residues 148–169 (DRYLSIVHATQPYRRGPPARVT) lie on the Cytoplasmic side of the membrane. The chain crosses the membrane as a helical span at residues 170-190 (LTCVVVWGLCLFFAIPDFIFL). Residues 191-223 (SANRDERLNAMHCRYNFPQVGRTALRGLQLVAG) are Extracellular-facing. A helical transmembrane segment spans residues 224 to 244 (FLLPLLVMAYCYARILAVLLV). Residues 245–256 (SRGQRRQRRMRL) are Cytoplasmic-facing. The helical transmembrane segment at 257–277 (VVVVVVAFALCWTPYHLVVLV) threads the bilayer. At 278-301 (DTLMDLGALDRNCGRESRVDVAKS) the chain is on the extracellular side. Residues 302-322 (VTSGLGYMHCCLNPLLYAFVG) traverse the membrane as a helical segment. Over 323–365 (VKFRERMWMLLLRLGCPDHRGHQRHPTLSRRESSWSETPSTPR) the chain is Cytoplasmic. A disordered region spans residues 342–365 (RGHQRHPTLSRRESSWSETPSTPR).

This sequence belongs to the G-protein coupled receptor 1 family. In terms of assembly, homomer. Forms heteromers with ACKR4. Interacts with PF4/CXCL4. In terms of processing, sulfation on Tyr-27 and Tyr-29 is essential for CXCL10 binding. N-glycosylated.

It localises to the cell membrane. In terms of biological role, receptor for the C-X-C chemokine CXCL9, CXCL10 and CXCL11 and mediates the proliferation, survival and angiogenic activity of mesangial cells through a heterotrimeric G-protein signaling pathway. Probably promotes cell chemotaxis response. Binds to CCL21. Upon activation by PF4, induces activated T-lymphocytes migration mediated via downstream Ras/extracellular signal-regulated kinase (ERK) signaling. The chain is C-X-C chemokine receptor type 3 (CXCR3) from Canis lupus familiaris (Dog).